The primary structure comprises 85 residues: Putative membrane protein insertion efficiency factor (85 aa).

The segment at 62–85 (KGGFDPVPLKKDKSASKHSHKHNH) is disordered.

It belongs to the UPF0161 family.

It localises to the cell membrane. Could be involved in insertion of integral membrane proteins into the membrane. The polypeptide is Putative membrane protein insertion efficiency factor (Staphylococcus aureus (strain Mu3 / ATCC 700698)).